The chain runs to 1063 residues: Structural polyprotein (1063 aa).

A disordered region spans residues 1–131 (MASTTPITME…LGPPTNPFQA (131 aa)). The interval 30–69 (GASQSRRPRPPRQRDSSTSGDDSGRDSGGPRRRRGNRGRG) is human C1QBP/SF2P32-binding. Phosphoserine; by host is present on Ser-46. A compositionally biased stretch (basic residues) spans 59-69 (PRRRRGNRGRG). Pro residues predominate over residues 93–107 (APKPSRAPPQQPQPP). Cys-153 and Cys-197 are joined by a disulfide. The functions as E2 signal peptide stretch occupies residues 279 to 300 (GAPQAFLAGLLLAAVAVGTARA). Residues 301-534 (GLQPRADMAA…LWLATANALS (234 aa)) lie on the Extracellular side of the membrane. The interval 305–347 (RADMAAPPAPPQPPCAHGQHYGHHHHQLPFLGHDGHHGGTLRV) is disordered. Residues Asn-353, Asn-371, Asn-410, and Asn-429 are each glycosylated (N-linked (GlcNAc...) asparagine; by host). A helical membrane pass occupies residues 535–555 (LDHALAAFVLLFPWVLIFMVC). The Cytoplasmic portion of the chain corresponds to 556–582 (RRACRRRGAAAALTAVVLQGYNPPAYG). Residues 563-582 (GAAAALTAVVLQGYNPPAYG) form a functions as E1 signal peptide region. Residues 583–1028 (EEAFTYLCTA…QTWAEWAAAH (446 aa)) are Extracellular-facing. 8 cysteine pairs are disulfide-bonded: Cys-590–Cys-595, Cys-619–Cys-824, Cys-641–Cys-653, Cys-699–Cys-712, Cys-758–Cys-767, Cys-807–Cys-817, Cys-931–Cys-934, and Cys-950–Cys-983. Asn-658 is a glycosylation site (N-linked (GlcNAc...) asparagine; by host). Asn-670 and Ala-671 together coordinate Ca(2+). Asp-718 and Thr-719 together coordinate Ca(2+). Asn-759 and Asn-791 each carry an N-linked (GlcNAc...) asparagine; by host glycan. O-linked (GalNAc...) threonine; by host glycans are attached at residues Thr-1011 and Thr-1012. The helical transmembrane segment at 1029-1049 (WWQLTLGAVCALLLAGLLACC) threads the bilayer. Residues 1050 to 1063 (AKCLYYLRGAIAPR) are Extracellular-facing.

As to quaternary structure, homodimer; further assembles into homooligomer. Interacts with human C1QBP. Interacts (via N-terminus) with protease/methyltransferase p150. In terms of assembly, heterodimer with spike glycoprotein E2. Heterodimer with spike glycoprotein E1. Post-translationally, structural polyprotein: Specific enzymatic cleavages in vivo yield mature proteins. Two signal peptidase-mediated cleavages within the polyprotein produce the structural proteins capsid, E2, and E1. The E2 signal peptide remains attached to the C-terminus of the capsid protein after cleavage by the signal peptidase. Another signal peptide at E2 C-terminus directs E1 to the ER, with a similar mechanism. In terms of processing, contains three N-linked oligosaccharides. Capsid is phosphorylated on Ser-46 by host. This phosphorylation negatively regulates capsid protein RNA-binding activity. Dephosphorylated by human PP1A.

The protein localises to the virion. It is found in the host cytoplasm. It localises to the host mitochondrion. The protein resides in the virion membrane. Its subcellular location is the host Golgi apparatus membrane. Capsid protein interacts with genomic RNA and assembles into icosahedric core particles 65-70 nm in diameter. The resulting nucleocapsid eventually associates with the cytoplasmic domain of E2 at the cell membrane, leading to budding and formation of mature virions from host Golgi membranes. Phosphorylation negatively regulates RNA-binding activity, possibly delaying virion assembly during the viral replication phase. Capsid protein dimerizes and becomes disulfide-linked in the virion. Modulates genomic RNA replication. Modulates subgenomic RNA synthesis by interacting with human C1QBP/SF2P32. Induces both perinuclear clustering of mitochondria and the formation of electron-dense intermitochondrial plaques, both hallmarks of rubella virus infected cells. Induces apoptosis when expressed in transfected cells. Functionally, responsible for viral attachment to target host cell, by binding to the cell receptor. Its transport to the plasma membrane depends on interaction with E1 protein. The surface glycoproteins display an irregular helical organization and a pseudo-tetrameric inner nucleocapsid arrangement. Its function is as follows. Class II viral fusion protein. Fusion activity is inactive as long as E1 is bound to E2 in mature virion. After virus attachment to target cell and clathrin-mediated endocytosis, acidification of the endosome would induce dissociation of E1/E2 heterodimer and concomitant trimerization of the E1 subunits. This E1 homotrimer is fusion active, and promotes release of viral nucleocapsid in cytoplasm after endosome and viral membrane fusion. The cytoplasmic tail of spike glycoprotein E1 modulates virus release. The surface glycoproteins display an irregular helical organization and a pseudo-tetrameric inner nucleocapsid arrangement. This is Structural polyprotein from Rubella virus (strain RN-UK86) (RUBV).